The primary structure comprises 79 residues: Small ribosomal subunit protein bS16cz (79 aa).

This sequence belongs to the bacterial ribosomal protein bS16 family.

It is found in the plastid. It localises to the chloroplast. This is Small ribosomal subunit protein bS16cz from Arabidopsis thaliana (Mouse-ear cress).